The chain runs to 156 residues: UPF0039 protein Mb2876c (156 aa).

Residues Val-8 to Ser-150 enclose the N-acetyltransferase domain.

This sequence belongs to the UPF0039 (ElaA) family.

The protein is UPF0039 protein Mb2876c of Mycobacterium bovis (strain ATCC BAA-935 / AF2122/97).